The sequence spans 80 residues: Antitoxin VapB15 (80 aa).

The disordered stretch occupies residues 60–80 (DFSNDEIESFSDTDRKLADES). Glu67 is a Mg(2+) binding site. A Mn(2+)-binding site is contributed by Glu67. The segment covering 71–80 (DTDRKLADES) has biased composition (basic and acidic residues).

In terms of assembly, forms a VapB15-VapC15(2) heterotrimer and a VapB15(2)-VapC15(2) heterotetramer; each toxin pair forms a homodimer which creates a channel in which the antitoxin binds. Mg(2+) is required as a cofactor. Mn(2+) serves as cofactor.

Its function is as follows. Antitoxin component of a type II toxin-antitoxin (TA) system. Neutralizes the toxic effect of cognate toxin VapC15. This is Antitoxin VapB15 (vapB15) from Mycobacterium tuberculosis (strain CDC 1551 / Oshkosh).